A 512-amino-acid polypeptide reads, in one-letter code: Retinaldehyde dehydrogenase 3 (512 aa).

The disordered stretch occupies residues 1-23 (MATANGAVENGQPDGKPPALPRP). The residue at position 2 (A2) is an N-acetylalanine. NAD(+) is bound by residues K204, E207, and 257–262 (GSTEVG). E280 (proton acceptor) is an active-site residue. C314 functions as the Nucleophile in the catalytic mechanism. Residues Q361 and E411 each coordinate NAD(+).

This sequence belongs to the aldehyde dehydrogenase family. In terms of assembly, homotetramer.

It localises to the cytoplasm. The enzyme catalyses all-trans-retinal + NAD(+) + H2O = all-trans-retinoate + NADH + 2 H(+). The catalysed reaction is retinal + NAD(+) + H2O = retinoate + NADH + 2 H(+). It catalyses the reaction all-trans-13,14-dihydroretinal + NAD(+) + H2O = all-trans-13,14-dihydroretinoate + NADH + 2 H(+). The protein operates within cofactor metabolism; retinol metabolism. In terms of biological role, catalyzes the NAD-dependent oxidation of aldehyde substrates, such as all-trans-retinal and all-trans-13,14-dihydroretinal, to their corresponding carboxylic acids, all-trans-retinoate and all-trans-13,14-dihydroretinoate, respectively. High specificity for all-trans-retinal as substrate, can also accept acetaldehyde as substrate in vitro but with lower affinity. Required for the biosynthesis of normal levels of retinoate in the embryonic ocular and nasal regions; a critical lipid in the embryonic development of the eye and the nasal region. The chain is Retinaldehyde dehydrogenase 3 (Aldh1a3) from Rattus norvegicus (Rat).